We begin with the raw amino-acid sequence, 240 residues long: MRIDVLTLFPEMFSIFNHSIIGRAIENEFLKINTVNIRDYTINKHKKVDDYPYGGGAGMVMAAQPIVDSIKTVKKENKGKVIFLGPKGKTFNQDLAKELAREEELIFLCGHYEGIDERAYEYIDMEISLGDFVLTGGEMACIPIVDSICRLLDGVLGSSESYEDESFYNGLLEYPQYTRPAIYEGKAVPKVLLSGHHENIKKWRKAKSLIITNKVRPDLFKKYKLTEEDKKILKDFNKKL.

Residues Gly110 and Leu129–Leu134 each bind S-adenosyl-L-methionine.

Belongs to the RNA methyltransferase TrmD family. In terms of assembly, homodimer.

It localises to the cytoplasm. It carries out the reaction guanosine(37) in tRNA + S-adenosyl-L-methionine = N(1)-methylguanosine(37) in tRNA + S-adenosyl-L-homocysteine + H(+). Functionally, specifically methylates guanosine-37 in various tRNAs. This is tRNA (guanine-N(1)-)-methyltransferase from Clostridium botulinum (strain Loch Maree / Type A3).